The sequence spans 680 residues: NADPH--cytochrome P450 reductase (680 aa).

At 1 to 5 (MALDK) the chain is on the lumenal side. Residues 6–23 (LDLYVIITLVVAIAAYFA) traverse the membrane as a helical segment. The Cytoplasmic portion of the chain corresponds to 24–680 (KNQFLDQQQD…VQNRYQEDVW (657 aa)). Residues 60-204 (TLLLFGSQTG…DFLAWKDNVF (145 aa)) enclose the Flavodoxin-like domain. Residues 66–71 (SQTGTA), 117–120 (ATYG), 152–161 (LGNSTYEFFN), and Asp-187 contribute to the FMN site. The FAD-binding FR-type domain maps to 264-509 (THPFLARIVK…NGPRGKFSKF (246 aa)). Residue Arg-283 participates in NADP(+) binding. FAD-binding positions include 439–442 (RYYS), 457–459 (TAV), and 473–476 (GVVT). Residues Thr-537, 599-600 (SR), 606-610 (KVYVQ), and Asp-642 each bind NADP(+). Position 680 (Trp-680) interacts with FAD.

Belongs to the NADPH--cytochrome P450 reductase family. This sequence in the N-terminal section; belongs to the flavodoxin family. It in the C-terminal section; belongs to the flavoprotein pyridine nucleotide cytochrome reductase family. The cofactor is FAD. It depends on FMN as a cofactor.

The protein localises to the endoplasmic reticulum membrane. It localises to the mitochondrion outer membrane. It is found in the cell membrane. It catalyses the reaction 2 oxidized [cytochrome P450] + NADPH = 2 reduced [cytochrome P450] + NADP(+) + H(+). Its function is as follows. This enzyme is required for electron transfer from NADP to cytochrome P450 in microsomes. It can also provide electron transfer to heme oxygenase and cytochrome B5. Involved in ergosterol biosynthesis. This chain is NADPH--cytochrome P450 reductase, found in Candida tropicalis (Yeast).